The following is a 206-amino-acid chain: Sclerostin domain-containing protein 1 (206 aa).

Residues methionine 1–alanine 23 form the signal peptide. Asparagine 47 carries N-linked (GlcNAc...) asparagine glycosylation. Disulfide bonds link cysteine 75–cysteine 133, cysteine 89–cysteine 147, cysteine 100–cysteine 163, and cysteine 104–cysteine 165. Residues cysteine 75–arginine 170 enclose the CTCK domain. Asparagine 173 carries an N-linked (GlcNAc...) asparagine glycan. The segment at glutamate 174–serine 206 is disordered. Positions valine 188–serine 206 are enriched in basic residues.

This sequence belongs to the sclerostin family. As to quaternary structure, interacts with BMP2, BMP4, BMP6 and BMP7 with high affinity. In terms of tissue distribution, highly expressed in kidney and weakly in lung.

Its subcellular location is the secreted. Its function is as follows. May be involved in the onset of endometrial receptivity for implantation/sensitization for the decidual cell reaction Enhances Wnt signaling and inhibits TGF-beta signaling. Directly antagonizes activity of BMP2, BMP4, BMP6 and BMP7 in a dose-dependent manner. This Homo sapiens (Human) protein is Sclerostin domain-containing protein 1 (SOSTDC1).